We begin with the raw amino-acid sequence, 599 residues long: MALSFRISSSSPLICRATLSNGDNSRNYHTTDAAFIRRAADLSEMSAGLTSPHPNFGCVIATSSGKVAGEGYLYAQGTKPAEALAVEAAGEFSRGATAYLNMEPGDCHGDHTAVSALVQAGIERVVVGIRHPLQHLRGSAIRELRSHGIEVNVLGEDFESKVLEDARKSCLLVNAPLIHRACSRVPFSVLKYAMTLDGKIAASSGHAAWISSKLSRTRVFELRGGSDAVIVGGNTVRQDDPRLTARHGQGHTPTRIVMTQSLDLPEKANLWDVSEVSTIVVTQRGARKSFQKLLASKGVEVVEFDMLNPREVMEYFHLRGYLSILWECGGTLAASAISSSVIHKVVAFVAPKIIGGSKAPSPVGDLGMVEMTQALNLIDVCYEQVGPDMLVSGFLQPIPDLLPVIPSEDATVEIDPSVDPFEPSIIFFYKTWDLYGMWNITIRYHTTVHVKWYLALSKKHNLLILHPKTLKANKFVGVENPKAYDCVEKIRTARSPEEAALIGRSTLRQKPELVRNDWEDVKIEVMYKALKCKFSTYPHLKSMLLSTIGTVLVEASPHDLFWGGGREGEGLNYLGRLLMQLRSEYLGESSVSAEKTSSA.

A chloroplast-targeting transit peptide spans 1–17 (MALSFRISSSSPLICRA). Residues 30–152 (TTDAAFIRRA…ELRSHGIEVN (123 aa)) form the CMP/dCMP-type deaminase domain.

It in the C-terminal section; belongs to the YbiA family.

The protein resides in the plastid. It localises to the chloroplast. It carries out the reaction 5-amino-6-(5-phospho-D-ribitylamino)uracil + NADP(+) = 5-amino-6-(5-phospho-D-ribosylamino)uracil + NADPH + H(+). The enzyme catalyses 2,5-diamino-6-hydroxy-4-(5-phosphoribosylamino)-pyrimidine + H2O = 2,5,6-triamino-4-hydroxypyrimidine + D-ribose 5-phosphate. The catalysed reaction is 5-amino-6-(5-phospho-D-ribosylamino)uracil + H2O = 5,6-diaminouracil + D-ribose 5-phosphate. The protein operates within cofactor biosynthesis; riboflavin biosynthesis; 5-amino-6-(D-ribitylamino)uracil from GTP: step 3/4. Pyrimidine reductase involved in the riboflavin biosynthesis pathway. Also has a non-functional N-terminal deaminase domain that lacks the catalytically essential zinc-binding residues. Its function is as follows. Catalyzes the hydrolysis of the N-glycosidic bond in the first two intermediates of riboflavin biosynthesis, which are highly reactive metabolites, yielding relatively innocuous products. Thus, can divert a surplus of harmful intermediates into relatively harmless products and pre-empt the damage these intermediates would otherwise do. Helps maintain flavin levels. Has no activity against GTP, nucleoside monophosphates or ADP-ribose. The sequence is that of Riboflavin biosynthesis protein PYRR, chloroplastic (PYRR) from Arabidopsis thaliana (Mouse-ear cress).